We begin with the raw amino-acid sequence, 422 residues long: Phagosome assembly factor 1 (422 aa).

Belongs to the PHAF1 family. Interacts with BCAS3; the interaction is requrired for the association with the phagophore.

It localises to the cytoplasm. The protein localises to the preautophagosomal structure. Functionally, plays a regulatory role in autophagic activity. In complex with BCAS3, associates with the autophagosome formation site during both non-selective and selective autophagy. This chain is Phagosome assembly factor 1, found in Homo sapiens (Human).